Consider the following 118-residue polypeptide: Ribonuclease P protein component (118 aa).

Belongs to the RnpA family. Consists of a catalytic RNA component (M1 or rnpB) and a protein subunit.

The enzyme catalyses Endonucleolytic cleavage of RNA, removing 5'-extranucleotides from tRNA precursor.. Its function is as follows. RNaseP catalyzes the removal of the 5'-leader sequence from pre-tRNA to produce the mature 5'-terminus. It can also cleave other RNA substrates such as 4.5S RNA. The protein component plays an auxiliary but essential role in vivo by binding to the 5'-leader sequence and broadening the substrate specificity of the ribozyme. The chain is Ribonuclease P protein component from Shewanella denitrificans (strain OS217 / ATCC BAA-1090 / DSM 15013).